Here is a 313-residue protein sequence, read N- to C-terminus: Acetyl-coenzyme A carboxylase carboxyl transferase subunit beta (313 aa).

Positions 24 to 293 (LWIKCPDSGQ…LETASKSVQP (270 aa)) constitute a CoA carboxyltransferase N-terminal domain.

The protein belongs to the AccD/PCCB family. In terms of assembly, acetyl-CoA carboxylase is a heterohexamer composed of biotin carboxyl carrier protein (AccB), biotin carboxylase (AccC) and two subunits each of ACCase subunit alpha (AccA) and ACCase subunit beta (AccD).

The protein localises to the cytoplasm. It carries out the reaction N(6)-carboxybiotinyl-L-lysyl-[protein] + acetyl-CoA = N(6)-biotinyl-L-lysyl-[protein] + malonyl-CoA. It functions in the pathway lipid metabolism; malonyl-CoA biosynthesis; malonyl-CoA from acetyl-CoA: step 1/1. Component of the acetyl coenzyme A carboxylase (ACC) complex. Biotin carboxylase (BC) catalyzes the carboxylation of biotin on its carrier protein (BCCP) and then the CO(2) group is transferred by the transcarboxylase to acetyl-CoA to form malonyl-CoA. This chain is Acetyl-coenzyme A carboxylase carboxyl transferase subunit beta, found in Bradyrhizobium diazoefficiens (strain JCM 10833 / BCRC 13528 / IAM 13628 / NBRC 14792 / USDA 110).